Here is a 230-residue protein sequence, read N- to C-terminus: Fibronectin type III domain-containing protein 4 (230 aa).

The signal sequence occupies residues 1–40 (MPGCLPADSVGTMASLMPLSPYLSPTVLLLVSCDLGFVRA). Residues 41 to 163 (DRPPSPVNVT…GLDGERPLQT (123 aa)) are Extracellular-facing. Residues 43–136 (PPSPVNVTVT…PRVHFRTLKG (94 aa)) enclose the Fibronectin type-III domain. N-linked (GlcNAc...) asparagine glycosylation is found at Asn48 and Asn143. Residues 118 to 156 (GLRGESPPGPRVHFRTLKGSDRLPSNSSSPGDITVEGLD) are disordered. A helical membrane pass occupies residues 164–184 (GEVVIIVVVLLMWAAVIGLFC). The Cytoplasmic segment spans residues 185-230 (RQYDIIKDNDSNNNPKEKGKGPEQSPQGRPVGTRQKKSPSINTIDV). The segment covering 193-205 (NDSNNNPKEKGKG) has biased composition (basic and acidic residues). The tract at residues 193–230 (NDSNNNPKEKGKGPEQSPQGRPVGTRQKKSPSINTIDV) is disordered.

Its subcellular location is the membrane. It is found in the secreted. In terms of biological role, has anti-inflammatory properties. In the colon, acts on macrophages to down-regulate inflammation. May suppress osteoclastogenesis and mature osteoclast resorptive function. In white adipose tissue, decreases local inflammation, via interaction with GPR116. Also required for proper systemic glucose tolerance, specifically sensitizing white adipocytes to insulin and promoting glucose uptake. The insulin sensitizing function in adipose tissue is mediated by interaction with ADGRF5/GPR116 and activation of cAMP signaling. This Bos taurus (Bovine) protein is Fibronectin type III domain-containing protein 4 (FNDC4).